The chain runs to 502 residues: Xylan O-acetyltransferase 13 (502 aa).

Topologically, residues 1-53 are cytoplasmic; sequence MWSALFSHLREVHKRSGVKEEKLIMKSPPAAGEAGCHKPQATATNKMTVLQSP. The chain crosses the membrane as a helical; Signal-anchor for type II membrane protein span at residues 54–76; that stretch reads LGLRTILTSLVAFFIVVSSVSLL. The Lumenal portion of the chain corresponds to 77-502; that stretch reads FDRGQDAQAQ…EFLYAYIMHK (426 aa). Intrachain disulfides connect Cys-152–Cys-203, Cys-174–Cys-239, Cys-183–Cys-483, and Cys-399–Cys-479. N-linked (GlcNAc...) asparagine glycosylation is found at Asn-153, Asn-163, Asn-189, and Asn-209. Residues 226–228 carry the GDS motif motif; the sequence is GDS. Catalysis depends on Ser-228, which acts as the Nucleophile. Residues Asn-255, Asn-267, Asn-372, Asn-401, and Asn-442 are each glycosylated (N-linked (GlcNAc...) asparagine). Asp-478 acts as the Proton donor in catalysis. The DXXH motif motif lies at 478–481; it reads DCTH. The active-site Proton acceptor is the His-481.

It belongs to the PC-esterase family. TBL subfamily.

It localises to the golgi apparatus membrane. Functionally, xylan acetyltransferase required for 2-O- and 3-O-monoacetylation of xylosyl residues in xylan. Catalyzes the 2-O-acetylation of xylan, followed by nonenzymatic acetyl migration to the O-3 position, resulting in products that are monoacetylated at both O-2 and O-3 positions. In Oryza sativa subsp. japonica (Rice), this protein is Xylan O-acetyltransferase 13.